Consider the following 447-residue polypeptide: tRNA(Ile)-lysidine synthase (447 aa).

31 to 36 (SGGMDS) is a binding site for ATP.

The protein belongs to the tRNA(Ile)-lysidine synthase family.

Its subcellular location is the cytoplasm. The catalysed reaction is cytidine(34) in tRNA(Ile2) + L-lysine + ATP = lysidine(34) in tRNA(Ile2) + AMP + diphosphate + H(+). Functionally, ligates lysine onto the cytidine present at position 34 of the AUA codon-specific tRNA(Ile) that contains the anticodon CAU, in an ATP-dependent manner. Cytidine is converted to lysidine, thus changing the amino acid specificity of the tRNA from methionine to isoleucine. The sequence is that of tRNA(Ile)-lysidine synthase from Pseudothermotoga lettingae (strain ATCC BAA-301 / DSM 14385 / NBRC 107922 / TMO) (Thermotoga lettingae).